A 239-amino-acid polypeptide reads, in one-letter code: Small ribosomal subunit protein uS5 (239 aa).

A disordered region spans residues 1-62 (MADETEIQAA…DDRRGSEEQG (62 aa)). Positions 9 to 19 (AAAPAEAAPGA) are enriched in low complexity. Over residues 34-62 (GGNDRGGDRGRGRDGRGRRDDRRGSEEQG) the composition is skewed to basic and acidic residues. The S5 DRBM domain maps to 65–128 (LIEKLVHINR…AAAKKAMVRV (64 aa)).

The protein belongs to the universal ribosomal protein uS5 family. As to quaternary structure, part of the 30S ribosomal subunit. Contacts proteins S4 and S8.

Functionally, with S4 and S12 plays an important role in translational accuracy. Its function is as follows. Located at the back of the 30S subunit body where it stabilizes the conformation of the head with respect to the body. In Rhizorhabdus wittichii (strain DSM 6014 / CCUG 31198 / JCM 15750 / NBRC 105917 / EY 4224 / RW1) (Sphingomonas wittichii), this protein is Small ribosomal subunit protein uS5.